The sequence spans 545 residues: CTP synthase (545 aa).

The amidoligase domain stretch occupies residues 1-266 (MTTNYIFVTG…DDYICKRFSL (266 aa)). Residue Ser14 coordinates CTP. Position 14 (Ser14) interacts with UTP. ATP is bound by residues 15–20 (SLGKGI) and Asp72. Mg(2+) contacts are provided by Asp72 and Glu140. Residues 147 to 149 (DIE), 187 to 192 (KTKPTQ), and Lys223 contribute to the CTP site. UTP is bound by residues 187-192 (KTKPTQ) and Lys223. 239–241 (KDV) is an ATP binding site. The Glutamine amidotransferase type-1 domain occupies 291 to 542 (TIGMIGKYVE…VKAAGEYQKR (252 aa)). Gly352 is an L-glutamine binding site. Cys379 (nucleophile; for glutamine hydrolysis) is an active-site residue. L-glutamine-binding positions include 380–383 (LGMQ), Glu403, and Arg470. Active-site residues include His515 and Glu517.

It belongs to the CTP synthase family. In terms of assembly, homotetramer.

The catalysed reaction is UTP + L-glutamine + ATP + H2O = CTP + L-glutamate + ADP + phosphate + 2 H(+). The enzyme catalyses L-glutamine + H2O = L-glutamate + NH4(+). It catalyses the reaction UTP + NH4(+) + ATP = CTP + ADP + phosphate + 2 H(+). It functions in the pathway pyrimidine metabolism; CTP biosynthesis via de novo pathway; CTP from UDP: step 2/2. Its activity is regulated as follows. Allosterically activated by GTP, when glutamine is the substrate; GTP has no effect on the reaction when ammonia is the substrate. The allosteric effector GTP functions by stabilizing the protein conformation that binds the tetrahedral intermediate(s) formed during glutamine hydrolysis. Inhibited by the product CTP, via allosteric rather than competitive inhibition. Its function is as follows. Catalyzes the ATP-dependent amination of UTP to CTP with either L-glutamine or ammonia as the source of nitrogen. Regulates intracellular CTP levels through interactions with the four ribonucleotide triphosphates. This chain is CTP synthase, found in Yersinia enterocolitica serotype O:8 / biotype 1B (strain NCTC 13174 / 8081).